The sequence spans 251 residues: Triosephosphate isomerase (251 aa).

Residue 9-11 (NWK) coordinates substrate. Catalysis depends on H95, which acts as the Electrophile. E167 functions as the Proton acceptor in the catalytic mechanism. Substrate contacts are provided by residues G173, S213, and 234–235 (GG). A Phosphoserine modification is found at S213.

This sequence belongs to the triosephosphate isomerase family. In terms of assembly, homodimer.

It localises to the cytoplasm. It carries out the reaction D-glyceraldehyde 3-phosphate = dihydroxyacetone phosphate. It participates in carbohydrate biosynthesis; gluconeogenesis. It functions in the pathway carbohydrate degradation; glycolysis; D-glyceraldehyde 3-phosphate from glycerone phosphate: step 1/1. Functionally, involved in the gluconeogenesis. Catalyzes stereospecifically the conversion of dihydroxyacetone phosphate (DHAP) to D-glyceraldehyde-3-phosphate (G3P). The protein is Triosephosphate isomerase of Bacillus cereus (strain AH820).